The primary structure comprises 197 residues: Small ribosomal subunit protein uS2 (197 aa).

The protein belongs to the universal ribosomal protein uS2 family.

In Archaeoglobus fulgidus (strain ATCC 49558 / DSM 4304 / JCM 9628 / NBRC 100126 / VC-16), this protein is Small ribosomal subunit protein uS2 (rps2).